Consider the following 400-residue polypeptide: S-adenosylmethionine synthase (400 aa).

His17 lines the ATP pocket. Asp19 contacts Mg(2+). K(+) is bound at residue Glu45. L-methionine-binding residues include Glu58 and Gln101. Positions 101-111 (QSPDIAMGVDQ) are flexible loop. ATP-binding positions include 177-179 (DGK), 244-245 (RF), Asp253, 259-260 (RK), Ala276, and Lys280. An L-methionine-binding site is contributed by Asp253. Lys284 is an L-methionine binding site.

Belongs to the AdoMet synthase family. Homotetramer; dimer of dimers. Mg(2+) is required as a cofactor. The cofactor is K(+).

The protein resides in the cytoplasm. It catalyses the reaction L-methionine + ATP + H2O = S-adenosyl-L-methionine + phosphate + diphosphate. The protein operates within amino-acid biosynthesis; S-adenosyl-L-methionine biosynthesis; S-adenosyl-L-methionine from L-methionine: step 1/1. Catalyzes the formation of S-adenosylmethionine (AdoMet) from methionine and ATP. The overall synthetic reaction is composed of two sequential steps, AdoMet formation and the subsequent tripolyphosphate hydrolysis which occurs prior to release of AdoMet from the enzyme. The sequence is that of S-adenosylmethionine synthase from Bacillus licheniformis (strain ATCC 14580 / DSM 13 / JCM 2505 / CCUG 7422 / NBRC 12200 / NCIMB 9375 / NCTC 10341 / NRRL NRS-1264 / Gibson 46).